We begin with the raw amino-acid sequence, 369 residues long: DNA replication and repair protein RecF (369 aa).

An ATP-binding site is contributed by 30-37 (GQNGMGKT).

This sequence belongs to the RecF family.

The protein localises to the cytoplasm. The RecF protein is involved in DNA metabolism; it is required for DNA replication and normal SOS inducibility. RecF binds preferentially to single-stranded, linear DNA. It also seems to bind ATP. The polypeptide is DNA replication and repair protein RecF (Bacteroides thetaiotaomicron (strain ATCC 29148 / DSM 2079 / JCM 5827 / CCUG 10774 / NCTC 10582 / VPI-5482 / E50)).